We begin with the raw amino-acid sequence, 1926 residues long: Rho GTPase-activating protein 21-A (1926 aa).

The segment at 1–41 is disordered; sequence MATRRAIVPEQQQEPSSPASEISKNKDGQEQSEMVSPMEEE. Over residues 10–22 the composition is skewed to polar residues; sequence EQQQEPSSPASEI. A PDZ domain is found at 77–162; that stretch reads HTSIKDEENG…TLELSVMPKD (86 aa). Disordered stretches follow at residues 211-236, 353-378, 416-487, 571-592, 640-704, and 868-905; these read VEVP…TTQP, PTAQ…QIDW, TDYN…RSES, QPTR…DRSG, FQRK…DSDA, and GKLG…DVFS. Polar residues-rich tracts occupy residues 216–236, 353–372, and 416–429; these read SGTS…TTQP, PTAQ…SPGP, and TDYN…FSGQ. Low complexity predominate over residues 441-451; sequence QQSVQMRQRSV. The span at 452–466 shows a compositional bias: basic and acidic residues; it reads SQERLEDPVLMKEWP. Positions 468–479 are enriched in polar residues; it reads SASQDTLSSAVA. Residues 640–669 show a composition bias toward polar residues; sequence FQRKTQTESASGFQLDSVKTSMSASSSPPA. The region spanning 906 to 1019 is the PH domain; it reads DSNKEGFLYF…WIKAIQENGN (114 aa). The span at 1044-1064 shows a compositional bias: polar residues; it reads MSSASNKSEQSPKAPRQTLSI. The tract at residues 1044–1107 is disordered; the sequence is MSSASNKSEQ…SPPKDKGSWR (64 aa). Basic and acidic residues predominate over residues 1083-1105; it reads PKQESERRLFSKDDISPPKDKGS. The Rho-GAP domain maps to 1126–1318; the sequence is VRLDDCPPAH…TLIQKHDWFF (193 aa). Disordered regions lie at residues 1330–1381, 1396–1416, 1512–1540, 1573–1598, 1626–1658, and 1827–1915; these read VHEE…SGKD, ASRK…EDEL, QMEE…PKVV, LDPN…DERS, RQHR…TPRL, and STSE…LSGT. The segment covering 1512–1534 has biased composition (polar residues); it reads QMEESMSDSGTMLSNSSQASAQR. 2 stretches are compositionally biased toward polar residues: residues 1639–1653 and 1866–1902; these read VQAN…TEGS and TADI…NNFS.

The protein resides in the golgi apparatus membrane. Its subcellular location is the cell junction. It is found in the cytoplasmic vesicle membrane. The protein localises to the cytoplasm. It localises to the cytoskeleton. Functionally, GTPase-activating protein (GAP) for rhoa and cdc42. This is Rho GTPase-activating protein 21-A (arhgap21-a) from Xenopus laevis (African clawed frog).